The chain runs to 214 residues: MSVCALTLILGCFLLFLGDISKPAEGCTCAPSHPQDAFCNSDIVIRAKVVGKKLMKDGPFGTMRYTVKQMKMYRGFNKMPQVQYIYTEASESLCGVKLEVNKYQYLITGRVYEGKVYTGLCNLIERWEKLTFAQRKGLNHRYPLGCTCKIKPCYYLPCFITSKNECLWTDMLSNFGYPGYQSKNYACIKQKEGYCSWYRGWAPPDKTTINTTDP.

Positions 1–26 (MSVCALTLILGCFLLFLGDISKPAEG) are cleaved as a signal peptide. A Zn(2+)-binding site is contributed by Cys27. Involved in metalloproteinase-binding stretches follow at residues 27-30 (CTCA) and 91-92 (ES). Intrachain disulfides connect Cys27–Cys94, Cys29–Cys121, Cys39–Cys146, Cys148–Cys195, Cys153–Cys158, and Cys166–Cys187. The 120-residue stretch at 27-146 (CTCAPSHPQD…GLNHRYPLGC (120 aa)) folds into the NTR domain.

This sequence belongs to the protease inhibitor I35 (TIMP) family.

It is found in the secreted. The protein resides in the extracellular space. It localises to the extracellular matrix. Its function is as follows. Complexes with metalloproteinases (such as collagenases) and irreversibly inactivates them by binding to their catalytic zinc cofactor. May form part of a tissue-specific acute response to remodeling stimuli. The polypeptide is Metalloproteinase inhibitor 3 (timp3) (Xenopus laevis (African clawed frog)).